A 774-amino-acid chain; its full sequence is Fe(3+) dicitrate transport protein FecA (774 aa).

The signal sequence occupies residues 1 to 33; sequence MTPLRVFRKTTPLVNTIRLSLLPLAGLSFSAFA. A TonB box motif is present at residues 56 to 63; it reads FTLSVDAS. The TBDR plug domain maps to 129–250; the sequence is DVFEHAGARD…VGGVVNFVTR (122 aa). Residues 255 to 774 form the TBDR beta-barrel domain; sequence DFGIEAGVEG…TLYMQGSLKF (520 aa). The TonB C-terminal box signature appears at 757–774; the sequence is GIYAGQPRTLYMQGSLKF.

The protein belongs to the TonB-dependent receptor family. Interacts (via periplasmic N-terminus) with FecR (via periplasmic C-terminus).

Its subcellular location is the cell outer membrane. Functionally, fecA is the outer membrane receptor protein in the Fe(3+) dicitrate transport system. In Escherichia coli (strain K12), this protein is Fe(3+) dicitrate transport protein FecA (fecA).